The sequence spans 140 residues: MANERTFSILKPDATRRNITGAVNAVIEAAGLRIVGQRRIRMTREQAEKFYEVHKERPFFGELVEFMTSGPVVVQVLEGENAVAKYREVMGATNPAQAADGTIRKQFAESVGENTVHGSDSADNARLEIAQFFNDADIAA.

K11, F59, R87, T93, R104, and N114 together coordinate ATP. The active-site Pros-phosphohistidine intermediate is H117.

This sequence belongs to the NDK family. Homotetramer. Mg(2+) is required as a cofactor.

The protein localises to the cytoplasm. The catalysed reaction is a 2'-deoxyribonucleoside 5'-diphosphate + ATP = a 2'-deoxyribonucleoside 5'-triphosphate + ADP. It carries out the reaction a ribonucleoside 5'-diphosphate + ATP = a ribonucleoside 5'-triphosphate + ADP. In terms of biological role, major role in the synthesis of nucleoside triphosphates other than ATP. The ATP gamma phosphate is transferred to the NDP beta phosphate via a ping-pong mechanism, using a phosphorylated active-site intermediate. The sequence is that of Nucleoside diphosphate kinase from Methylorubrum extorquens (strain CM4 / NCIMB 13688) (Methylobacterium extorquens).